The following is a 415-amino-acid chain: Protrudin (415 aa).

Positions 1–24 (MQTSDRDLSGPEASPSGMPEVLSE) are disordered. The Cytoplasmic portion of the chain corresponds to 1 to 66 (MQTSDRDLSG…AGDGVRYLLR (66 aa)). The segment at 1–92 (MQTSDRDLSG…LFLTLNEGAW (92 aa)) is sufficient for homooligomerization. The tract at residues 1-210 (MQTSDRDLSG…LYLLPLCWVL (210 aa)) is sufficient for localization to endoplasmic reticulum tubular network and for interactions with REEP1, REEP5, ATL1, ATL2, ATL3 and SPAST. The tract at residues 51–64 (LEPLKDAGDGVRYL) is necessary for interaction with RAB11A and function in neurite outgrowth. Residues 67 to 87 (WQMPLCSLLTCLGLNILFLTL) traverse the membrane as a helical segment. Asn-88 is a topological domain (lumenal). A helical membrane pass occupies residues 89 to 109 (EGAWYSMGALMISVPALLGYL). Topologically, residues 110 to 192 (QEVCRGQLPE…NPVVSSQFYG (83 aa)) are cytoplasmic. Positions 193–213 (ALLGMVCMLYLLPLCWVLALL) form an intramembrane region, helical. Residues 214-415 (NSTLFLGNGD…CASCNQTLSK (202 aa)) are Cytoplasmic-facing. The segment at 254-290 (QGAGGRGLLDSSPAPTPTEDLTPGSVEEAEEAEPDEE) is disordered. The tract at residues 275–365 (TPGSVEEAEE…GCAATFSVLK (91 aa)) is necessary for interaction with KIF5A. Acidic residues predominate over residues 280–290 (EEAEEAEPDEE). The tract at residues 290 to 296 (EFKDAIE) is necessary for interaction with VAPA. The FYVE-type zinc finger occupies 348–414 (TNNFGNCAGC…VCASCNQTLS (67 aa)). Residues Cys-354, Cys-357, Cys-370, Cys-373, Cys-378, Cys-381, Cys-406, and Cys-409 each contribute to the Zn(2+) site.

As to quaternary structure, can form homooligomers (monomers, dimers and tetramers). Interacts with RAB11A (GDP-bound form); regulates RAB11A. Interacts with FKBP8; may negatively regulate ZFYVE27 phosphorylation. Isoform 1 interacts to a greater extent than isoform 2 with VAPB (via MSP domain). Isoform 1 interacts to a greater extent than isoform 2 with VAPA (via MSP domain). Interaction with VAPA may regulate ZFYVE27 retention in the endoplasmic reticulum and its function in cell projections formation. Interacts with ATL2, ATL3, SPAST and RTN3. Interacts with REEP1, REEP5 and ATL1. Interacts with RAB11B (GDP-bound form), SURF4, KIF5B and KIF5C. Isoform 1 and 2 interact with KIFA. In terms of processing, phosphorylated. Phosphorylation is induced by NGF through the MAPK/ERK pathway and modulates interaction with RAB11A. As to expression, astrocytes express both isoform 1 and isoform 2 and oligodendrocytes express only isoform 2 (at protein level). Isoform 1 is expressed specifically in the central nervous system and selectively in neuronal cells. Isoform 2 is expressed in cerebrum, cerebellum, spinal cord, heart, thymus, spleen, intestine and lung.

It is found in the recycling endosome membrane. Its subcellular location is the endoplasmic reticulum membrane. It localises to the cell projection. The protein localises to the growth cone membrane. Functionally, key regulator of RAB11-dependent vesicular trafficking during neurite extension through polarized membrane transport. Promotes axonal elongation and contributes to the establishment of neuronal cell polarity. Involved in nerve growth factor-induced neurite formation in VAPA-dependent manner. Contributes to both the formation and stabilization of the tubular ER network. Involved in ER morphogenesis by regulating the sheet-to-tubule balance and possibly the density of tubule interconnections. Acts as an adapter protein that facilitates the interaction of KIF5A with VAPA, VAPB, SURF4, RAB11A, RAB11B and RTN3 and the ZFYVE27-KIF5A complex contributes to the transport of these proteins in neurons. Can induce formation of neurite-like membrane protrusions in non-neuronal cells in a KIF5A/B-dependent manner. The chain is Protrudin (Zfyve27) from Mus musculus (Mouse).